The chain runs to 94 residues: Small ribosomal subunit protein uS17 (94 aa).

It belongs to the universal ribosomal protein uS17 family. Part of the 30S ribosomal subunit.

In terms of biological role, one of the primary rRNA binding proteins, it binds specifically to the 5'-end of 16S ribosomal RNA. The protein is Small ribosomal subunit protein uS17 of Streptomyces avermitilis (strain ATCC 31267 / DSM 46492 / JCM 5070 / NBRC 14893 / NCIMB 12804 / NRRL 8165 / MA-4680).